Here is a 783-residue protein sequence, read N- to C-terminus: Tripartite motif-containing protein 67 (783 aa).

An RING-type; degenerate zinc finger spans residues 7 to 42 (CPVCGSLFREPIILPCSHNVCLPCARTIAVQTPDGE). A B box-type 1; degenerate zinc finger spans residues 206 to 253 (AICQLCDRTPPEPAATLCEQCDVLYCSACQLKCHPSRGPFAKHRLVQP). A disordered region spans residues 247-295 (KHRLVQPPPPPPPPAEAASGPTGTAQGAPSGGGGCKSPGGAGAGATGGS). A compositionally biased stretch (pro residues) spans 252–261 (QPPPPPPPPA). Residues 275–293 (PSGGGGCKSPGGAGAGATG) show a composition bias toward gly residues. The B box-type 2 zinc-finger motif lies at 298 to 340 (RKFPTCPEHEMENYSMYCVSCRTPVCYLCLEEGRHAKHEVKPL). Residues Cys-303, His-306, Cys-326, and His-332 each coordinate Zn(2+). The stretch at 345-382 (KQHKAQLSQALNGVSDKAKEAKEFLVQLKNILQQIQEN) forms a coiled coil. In terms of domain architecture, COS spans 448–506 (IKENDPSGFLQISDALIKRVQVSQEQWVKGALEPKVSAEFDLTLDSEPLLQAIHQLDFI). The Fibronectin type-III domain maps to 513-607 (PPVPLLQLEK…KTVVLQTSDV (95 aa)). The 192-residue stretch at 589–780 (NSSGVGPYSK…VPTNLGRPKL (192 aa)) folds into the B30.2/SPRY domain.

It belongs to the TRIM/RBCC family.

It is found in the cytoplasm. Its subcellular location is the cytoskeleton. The sequence is that of Tripartite motif-containing protein 67 (TRIM67) from Homo sapiens (Human).